The primary structure comprises 404 residues: Homoserine O-succinyltransferase (404 aa).

The span at 1-25 (MTDIQADPAVTAADAAQADTSSPTA) shows a compositional bias: low complexity. The interval 1-30 (MTDIQADPAVTAADAAQADTSSPTAHQGKP) is disordered. Positions 75–384 (NAVLICHALN…HGHDAFLLED (310 aa)) constitute an AB hydrolase-1 domain. The Nucleophile role is filled by serine 179. Substrate is bound at residue arginine 249. Residues aspartate 344 and histidine 377 contribute to the active site. Aspartate 378 serves as a coordination point for substrate.

Belongs to the AB hydrolase superfamily. MetX family. Homodimer.

It is found in the cytoplasm. It carries out the reaction L-homoserine + succinyl-CoA = O-succinyl-L-homoserine + CoA. It participates in amino-acid biosynthesis; L-methionine biosynthesis via de novo pathway; O-succinyl-L-homoserine from L-homoserine: step 1/1. Transfers a succinyl group from succinyl-CoA to L-homoserine, forming succinyl-L-homoserine. The protein is Homoserine O-succinyltransferase of Ralstonia pickettii (strain 12J).